Here is a 342-residue protein sequence, read N- to C-terminus: uncharacterized protein (342 aa).

This is an uncharacterized protein from Acanthamoeba polyphaga (Amoeba).